A 231-amino-acid chain; its full sequence is Enolase-phosphatase E1 (231 aa).

The interval 206-231 (LLERPGNAPQPKHSHPKISSFENFNP) is disordered.

It belongs to the HAD-like hydrolase superfamily. MasA/MtnC family. Monomer. It depends on Mg(2+) as a cofactor.

The enzyme catalyses 5-methylsulfanyl-2,3-dioxopentyl phosphate + H2O = 1,2-dihydroxy-5-(methylsulfanyl)pent-1-en-3-one + phosphate. Its pathway is amino-acid biosynthesis; L-methionine biosynthesis via salvage pathway; L-methionine from S-methyl-5-thio-alpha-D-ribose 1-phosphate: step 3/6. It participates in amino-acid biosynthesis; L-methionine biosynthesis via salvage pathway; L-methionine from S-methyl-5-thio-alpha-D-ribose 1-phosphate: step 4/6. In terms of biological role, bifunctional enzyme that catalyzes the enolization of 2,3-diketo-5-methylthiopentyl-1-phosphate (DK-MTP-1-P) into the intermediate 2-hydroxy-3-keto-5-methylthiopentenyl-1-phosphate (HK-MTPenyl-1-P), which is then dephosphorylated to form the acireductone 1,2-dihydroxy-3-keto-5-methylthiopentene (DHK-MTPene). The chain is Enolase-phosphatase E1 from Leptospira borgpetersenii serovar Hardjo-bovis (strain JB197).